The following is a 247-amino-acid chain: Proteasome subunit alpha type-7 (247 aa).

Belongs to the peptidase T1A family. The 26S proteasome consists of a 20S proteasome core and two 19S regulatory subunits. The 20S proteasome core is composed of 28 subunits that are arranged in four stacked rings, resulting in a barrel-shaped structure. The two end rings are each formed by seven alpha subunits, and the two central rings are each formed by seven beta subunits. The catalytic chamber with the active sites is on the inside of the barrel.

The protein resides in the cytoplasm. Its subcellular location is the nucleus. Its function is as follows. The proteasome is a multicatalytic proteinase complex which is characterized by its ability to cleave peptides with Arg, Phe, Tyr, Leu, and Glu adjacent to the leaving group at neutral or slightly basic pH. The proteasome has an ATP-dependent proteolytic activity. This Trypanosoma brucei brucei protein is Proteasome subunit alpha type-7 (PSA4).